The primary structure comprises 188 residues: Threonylcarbamoyl-AMP synthase (188 aa).

Positions Glu-8 to Ala-188 constitute a YrdC-like domain.

This sequence belongs to the SUA5 family. TsaC subfamily.

It localises to the cytoplasm. It catalyses the reaction L-threonine + hydrogencarbonate + ATP = L-threonylcarbamoyladenylate + diphosphate + H2O. In terms of biological role, required for the formation of a threonylcarbamoyl group on adenosine at position 37 (t(6)A37) in tRNAs that read codons beginning with adenine. Catalyzes the conversion of L-threonine, HCO(3)(-)/CO(2) and ATP to give threonylcarbamoyl-AMP (TC-AMP) as the acyladenylate intermediate, with the release of diphosphate. In Thiobacillus denitrificans (strain ATCC 25259 / T1), this protein is Threonylcarbamoyl-AMP synthase.